The sequence spans 431 residues: Adenylosuccinate synthetase (431 aa).

GTP-binding positions include 13–19 (GDEGKGK) and 41–43 (GHT). Aspartate 14 (proton acceptor) is an active-site residue. Mg(2+) contacts are provided by aspartate 14 and glycine 41. IMP is bound by residues 14–17 (DEGK), 39–42 (NAGH), threonine 130, arginine 144, glutamine 225, threonine 240, and arginine 304. The Proton donor role is filled by histidine 42. 300 to 306 (ATTGRKR) is a substrate binding site. GTP contacts are provided by residues arginine 306, 332–334 (KLD), and 415–417 (STG).

It belongs to the adenylosuccinate synthetase family. In terms of assembly, homodimer. Mg(2+) serves as cofactor.

It localises to the cytoplasm. The catalysed reaction is IMP + L-aspartate + GTP = N(6)-(1,2-dicarboxyethyl)-AMP + GDP + phosphate + 2 H(+). It functions in the pathway purine metabolism; AMP biosynthesis via de novo pathway; AMP from IMP: step 1/2. In terms of biological role, plays an important role in the de novo pathway of purine nucleotide biosynthesis. Catalyzes the first committed step in the biosynthesis of AMP from IMP. This Shewanella frigidimarina (strain NCIMB 400) protein is Adenylosuccinate synthetase.